The sequence spans 360 residues: Phospho-N-acetylmuramoyl-pentapeptide-transferase (360 aa).

A run of 10 helical transmembrane segments spans residues 26-46, 72-92, 94-114, 132-152, 168-188, 199-219, 236-256, 263-283, 288-308, and 338-358; these read AIVS…RLIA, PTMG…LWAY, SNPY…VGFV, WKYF…YITG, VMPQ…VGTG, GLAI…AWAT, AGEL…FLWF, VFMG…IAVL, FLLV…ILQV, and VIVR…ATLK.

Belongs to the glycosyltransferase 4 family. MraY subfamily. Mg(2+) is required as a cofactor.

It localises to the cell inner membrane. The enzyme catalyses UDP-N-acetyl-alpha-D-muramoyl-L-alanyl-gamma-D-glutamyl-meso-2,6-diaminopimeloyl-D-alanyl-D-alanine + di-trans,octa-cis-undecaprenyl phosphate = di-trans,octa-cis-undecaprenyl diphospho-N-acetyl-alpha-D-muramoyl-L-alanyl-D-glutamyl-meso-2,6-diaminopimeloyl-D-alanyl-D-alanine + UMP. It functions in the pathway cell wall biogenesis; peptidoglycan biosynthesis. Its function is as follows. Catalyzes the initial step of the lipid cycle reactions in the biosynthesis of the cell wall peptidoglycan: transfers peptidoglycan precursor phospho-MurNAc-pentapeptide from UDP-MurNAc-pentapeptide onto the lipid carrier undecaprenyl phosphate, yielding undecaprenyl-pyrophosphoryl-MurNAc-pentapeptide, known as lipid I. The polypeptide is Phospho-N-acetylmuramoyl-pentapeptide-transferase (Cronobacter sakazakii (strain ATCC BAA-894) (Enterobacter sakazakii)).